The sequence spans 152 residues: UPF0225 protein YchJ (152 aa).

This sequence belongs to the UPF0225 family.

This is UPF0225 protein YchJ from Salmonella gallinarum (strain 287/91 / NCTC 13346).